Consider the following 406-residue polypeptide: MSAIDELQALIVELKSELEAQKTETRQQQAQAQQARQRIDRMSAEVVDSNPYSRLMALQRMNIVKDYERIREKTVAVVGVGGVGSVTADMLTRCGIGKLILFDYDKVELANMNRLFFTPDQAGLSKVEAAARTLTFINPDVKIETHNYNITTVDNFDNFLTTISQSGTEPGTPVDLILSCVDNFEARMAINAACNEHSLNWFESGVSENAVSGHIQFIRPGDTACFACAPPLVVAENIDERTLKREGVCAASLPTTMGITAGFLVQNALKYLLNFGEVSDYLGYNALNDFFPKMTLKPNPQCDDRHCLLRQKEFQTKPKPVKKEVEIVAEEPLHATNEWGIELVAEDAPATEDADEPKPIVSDIGEGLRLAYEAPSKSTETTSEATTTTTGDETSLDDLMAQMKSM.

The ATP site is built by glycine 82, aspartate 103, lysine 126, asparagine 149, and asparagine 183. The Zn(2+) site is built by cysteine 225 and cysteine 228. The active-site Glycyl thioester intermediate is the cysteine 249. Residues cysteine 302 and cysteine 307 each contribute to the Zn(2+) site. The tract at residues 373 to 397 (EAPSKSTETTSEATTTTTGDETSLD) is disordered. Over residues 378–393 (STETTSEATTTTTGDE) the composition is skewed to low complexity.

It belongs to the ubiquitin-activating E1 family. UBA5 subfamily.

Its function is as follows. E1-like enzyme which activates UFM1. This Drosophila willistoni (Fruit fly) protein is Ubiquitin-like modifier-activating enzyme 5.